Consider the following 317-residue polypeptide: Transcriptional regulator LsrR (317 aa).

Positions 33 to 56 (QSEISDRLGLTRLKVSRLLEKGHQ) form a DNA-binding region, H-T-H motif.

Belongs to the SorC transcriptional regulatory family.

It localises to the cytoplasm. With respect to regulation, inactivated by phosphorylated autoinducer-2 (phospho-AI-2). Phospho-AI-2 acts by binding to LsrR, which is then unable to bind to the promoter regions, allowing the transcription of the target genes. Its function is as follows. Transcriptional regulator that represses the expression of the lsr operon in the absence of the quorum-sensing signaling molecule autoinducer 2 (AI-2). It also represses the expression of the lsrRK operon. Acts by binding directly to the lsrA and lsrR promoter regions. In the presence of phosphorylated autoinducer-2 (phospho-AI-2), LsrR is inactivated, leading to the transcription of the genes. This chain is Transcriptional regulator LsrR (lsrR), found in Escherichia coli O157:H7.